The chain runs to 382 residues: Mannitol-1-phosphate 5-dehydrogenase (382 aa).

Residue 3-14 (ALHFGAGNIGRG) participates in NAD(+) binding. At lysine 269 the chain carries N6-acetyllysine.

Belongs to the mannitol dehydrogenase family.

The catalysed reaction is D-mannitol 1-phosphate + NAD(+) = beta-D-fructose 6-phosphate + NADH + H(+). This is Mannitol-1-phosphate 5-dehydrogenase from Shigella boydii serotype 18 (strain CDC 3083-94 / BS512).